A 319-amino-acid chain; its full sequence is MSKEIFIGIDGGGTKTSTVAVDSNGQELARHTSPCSNYHSVGEDLAKAAINEGIKYVIRKVKETITDDDNKEVTVGSICLGMSGVDREKDKLLVKSWVTELLGESINYSIHNDAIVALSSGTQGKLFGVVIICGTGCISLGFNREGVSGRSGGWGPLLGDYGSGYQIGYDILRHVLKAKDQVGPKTSLTQVLLEKLQLTKEEDLISWAYDPKTQSWQKFAQLSPLAFEQAQLGDEISNLILVDAANALYDLINSVIKKLGLDKEEKFPLVYTGGNIERKGILSDLLSKKIMENYPNAEILNTTCDPSMGAALLALNSKK.

Residue Thr-14 coordinates ATP. 2 residues coordinate substrate: Asn-37 and Asp-113. Thr-135 lines the ATP pocket. Substrate-binding positions include 153-155 (GWG) and Asp-160. An ATP-binding site is contributed by Ala-220.

It belongs to the eukaryotic-type N-acetylglucosamine kinase family. In terms of assembly, homodimer.

The catalysed reaction is N-acetyl-D-glucosamine + ATP = N-acetyl-D-glucosamine 6-phosphate + ADP + H(+). Its function is as follows. Converts N-acetylglucosamine (GlcNAc), a major component of complex carbohydrates, into GlcNAc 6-phosphate. Also has ManNAc kinase activity. The sequence is that of N-acetyl-D-glucosamine kinase (nagk) from Dictyostelium discoideum (Social amoeba).